Consider the following 378-residue polypeptide: Anhydro-N-acetylmuramic acid kinase (378 aa).

23 to 30 serves as a coordination point for ATP; that stretch reads GTSMDGAD.

The protein belongs to the anhydro-N-acetylmuramic acid kinase family.

It catalyses the reaction 1,6-anhydro-N-acetyl-beta-muramate + ATP + H2O = N-acetyl-D-muramate 6-phosphate + ADP + H(+). It participates in amino-sugar metabolism; 1,6-anhydro-N-acetylmuramate degradation. It functions in the pathway cell wall biogenesis; peptidoglycan recycling. Functionally, catalyzes the specific phosphorylation of 1,6-anhydro-N-acetylmuramic acid (anhMurNAc) with the simultaneous cleavage of the 1,6-anhydro ring, generating MurNAc-6-P. Is required for the utilization of anhMurNAc either imported from the medium or derived from its own cell wall murein, and thus plays a role in cell wall recycling. The sequence is that of Anhydro-N-acetylmuramic acid kinase from Bordetella pertussis (strain Tohama I / ATCC BAA-589 / NCTC 13251).